Here is a 393-residue protein sequence, read N- to C-terminus: Riboflavin biosynthesis protein RibBA (393 aa).

A DHBP synthase region spans residues 1–200 (MQFDNIDSAL…IDDLIEYRKK (200 aa)). D-ribulose 5-phosphate contacts are provided by residues 27–28 (RE), aspartate 32, 139–143 (RNGHT), and glutamate 163. Glutamate 28 serves as a coordination point for Mg(2+). Histidine 142 provides a ligand contact to Mg(2+). The segment at 201–393 (LEPEIEFKAK…TKKIKMGHLI (193 aa)) is GTP cyclohydrolase II. Position 249–253 (249–253 (RLHSA)) interacts with GTP. Residues cysteine 254, cysteine 265, and cysteine 267 each contribute to the Zn(2+) site. GTP is bound by residues glutamine 270, 291 to 293 (EGR), and threonine 313. The active-site Proton acceptor; for GTP cyclohydrolase activity is the aspartate 325. Residue arginine 327 is the Nucleophile; for GTP cyclohydrolase activity of the active site. GTP is bound by residues serine 348 and lysine 353.

The protein in the N-terminal section; belongs to the DHBP synthase family. This sequence in the C-terminal section; belongs to the GTP cyclohydrolase II family. The cofactor is Mg(2+). It depends on Mn(2+) as a cofactor. Requires Zn(2+) as cofactor.

It carries out the reaction D-ribulose 5-phosphate = (2S)-2-hydroxy-3-oxobutyl phosphate + formate + H(+). The enzyme catalyses GTP + 4 H2O = 2,5-diamino-6-hydroxy-4-(5-phosphoribosylamino)-pyrimidine + formate + 2 phosphate + 3 H(+). The protein operates within cofactor biosynthesis; riboflavin biosynthesis; 2-hydroxy-3-oxobutyl phosphate from D-ribulose 5-phosphate: step 1/1. It functions in the pathway cofactor biosynthesis; riboflavin biosynthesis; 5-amino-6-(D-ribitylamino)uracil from GTP: step 1/4. Catalyzes the conversion of D-ribulose 5-phosphate to formate and 3,4-dihydroxy-2-butanone 4-phosphate. Functionally, catalyzes the conversion of GTP to 2,5-diamino-6-ribosylamino-4(3H)-pyrimidinone 5'-phosphate (DARP), formate and pyrophosphate. The polypeptide is Riboflavin biosynthesis protein RibBA (Staphylococcus aureus (strain Mu50 / ATCC 700699)).